The primary structure comprises 216 residues: Large ribosomal subunit protein uL4 (216 aa).

The segment at 51–78 (KGRSEVHGSNTKPYKQKGTGRARRGDKK) is disordered. A compositionally biased stretch (basic residues) spans 64 to 76 (YKQKGTGRARRGD).

Belongs to the universal ribosomal protein uL4 family. Part of the 50S ribosomal subunit.

In terms of biological role, one of the primary rRNA binding proteins, this protein initially binds near the 5'-end of the 23S rRNA. It is important during the early stages of 50S assembly. It makes multiple contacts with different domains of the 23S rRNA in the assembled 50S subunit and ribosome. Forms part of the polypeptide exit tunnel. This is Large ribosomal subunit protein uL4 from Treponema pallidum (strain Nichols).